Consider the following 739-residue polypeptide: MTLEMSPEQIQESKIYREWGLTDEEYLKIKDEILDGRLPNFTETGMYAVMWSEHCCYKNSKPVLKKFPTTGPQVLMGPGEGAGVVDIGDDLAVVFKAESHNHPSYVEPYEGAATGSGGIIRDIFSMGARPIAILDSLRFGPIDNGKTRHIVDQVTAGIAGYGNCIGIPTVGGEVAFDESYAGNPLVNVMCVGLIEHKHIQKGQAKGVGNSIFYVGAKTGRDGIHGASFASKEFGSGSETQRSAVQVGDPFMEKLLLEACIEVIQNHGDILVGIQDMGAAGLVSSTSEMASKAGSGLRLNLDNVPQRETEMIPYEMMLSESQERMVLCVKKGHEQEIIDLFKKYDLDAVNIGQVTDDGFYTLYHKGEMVAHVPVDSLAEDAPTYYREAKVPERIQKFTDSEKYLPEITDSAVSEIFKKLLAQPTIASKKSIYETYDSRVMTNTVVAPGSDSAVLRVRGTNKALAMTTDCNARYLYLDPEKGGAIAVAEAARNIVASGGKPLAITDCLNFGNPEKPEQFWELTTAADGISRSCLALDTPVISGNVSLYNETNGSAILPTPMIGMVGLIENVKNITTQEFKKAGDLIVLVGQTFDDFSGSELQKMLIGEISGRIDFDLETEKINQDFVLKAITDGLVSSAHDLAEGGLAIALAESAFANGLGVDVKVDITNAQLFSETQGRFILSISPENQATFEKLLTESSVSGEVIGKVTDSGILEMNELSISTDEAVSIYEGALPALMK.

The active site involves His54. Residues Tyr57 and Lys96 each coordinate ATP. Glu98 is a Mg(2+) binding site. Residues 99-102 (SHNH) and Arg121 contribute to the substrate site. The active-site Proton acceptor is the His100. Asp122 lines the Mg(2+) pocket. Substrate is bound at residue Gln245. Position 275 (Asp275) interacts with Mg(2+). 319–321 (ESQ) is a substrate binding site. Residues Asp504 and Gly541 each coordinate ATP. Mg(2+) is bound at residue Asn542. Ser544 serves as a coordination point for substrate.

This sequence belongs to the FGAMS family. Monomer. Part of the FGAM synthase complex composed of 1 PurL, 1 PurQ and 2 PurS subunits.

Its subcellular location is the cytoplasm. It carries out the reaction N(2)-formyl-N(1)-(5-phospho-beta-D-ribosyl)glycinamide + L-glutamine + ATP + H2O = 2-formamido-N(1)-(5-O-phospho-beta-D-ribosyl)acetamidine + L-glutamate + ADP + phosphate + H(+). The protein operates within purine metabolism; IMP biosynthesis via de novo pathway; 5-amino-1-(5-phospho-D-ribosyl)imidazole from N(2)-formyl-N(1)-(5-phospho-D-ribosyl)glycinamide: step 1/2. Part of the phosphoribosylformylglycinamidine synthase complex involved in the purines biosynthetic pathway. Catalyzes the ATP-dependent conversion of formylglycinamide ribonucleotide (FGAR) and glutamine to yield formylglycinamidine ribonucleotide (FGAM) and glutamate. The FGAM synthase complex is composed of three subunits. PurQ produces an ammonia molecule by converting glutamine to glutamate. PurL transfers the ammonia molecule to FGAR to form FGAM in an ATP-dependent manner. PurS interacts with PurQ and PurL and is thought to assist in the transfer of the ammonia molecule from PurQ to PurL. This chain is Phosphoribosylformylglycinamidine synthase subunit PurL, found in Lactococcus lactis subsp. lactis (strain IL1403) (Streptococcus lactis).